The primary structure comprises 787 residues: Exocyst complex component SEC15B (787 aa).

Belongs to the SEC15 family. The exocyst complex is composed of SEC3, SEC5, SEC6, SEC8, SEC10, EXO70A1 and EXO84B. Interacts with EXO84B. Binds to EXO70H1 AND EXO70B2. Binds directly to B1L.

It localises to the cytoplasm. The protein resides in the cytosol. It is found in the cytoskeleton. The protein localises to the phragmoplast. Its subcellular location is the secreted. It localises to the cell wall. The protein resides in the extracellular exosome. In terms of biological role, component of the exocyst complex involved in the docking of exocytic vesicles with fusion sites on the plasma membrane during regulated or polarized secretion. Involved in polarized cell growth and organ morphogenesis. During cytokinesis, involved in cell plate initiation, cell plate maturation and formation of new primary cell wall. This chain is Exocyst complex component SEC15B, found in Arabidopsis thaliana (Mouse-ear cress).